The primary structure comprises 341 residues: Retinol dehydrogenase 10 (341 aa).

A helical; Signal-anchor transmembrane segment spans residues 3-23 (IVVEFFLVTFKVLWAFVLAAA). Residue 40 to 64 (LITGAGSGLGRLFALEFARRRALLV) participates in NADP(+) binding. S197 is a substrate binding site. The active-site Proton acceptor is the Y210.

It belongs to the short-chain dehydrogenases/reductases (SDR) family. As to expression, detected in retina, entire eyecups and in liver (at protein level).

It localises to the microsome membrane. The protein localises to the endoplasmic reticulum membrane. The enzyme catalyses all-trans-retinol + NADP(+) = all-trans-retinal + NADPH + H(+). It functions in the pathway cofactor metabolism; retinol metabolism. Functionally, retinol dehydrogenase with a clear preference for NADP. Converts all-trans-retinol to all-trans-retinal. The sequence is that of Retinol dehydrogenase 10 (Rdh10) from Rattus norvegicus (Rat).